Reading from the N-terminus, the 239-residue chain is Ribonuclease PH (239 aa).

Phosphate-binding positions include Arg-86 and 124-126 (GTR).

Belongs to the RNase PH family. Homohexameric ring arranged as a trimer of dimers.

It catalyses the reaction tRNA(n+1) + phosphate = tRNA(n) + a ribonucleoside 5'-diphosphate. In terms of biological role, phosphorolytic 3'-5' exoribonuclease that plays an important role in tRNA 3'-end maturation. Removes nucleotide residues following the 3'-CCA terminus of tRNAs; can also add nucleotides to the ends of RNA molecules by using nucleoside diphosphates as substrates, but this may not be physiologically important. Probably plays a role in initiation of 16S rRNA degradation (leading to ribosome degradation) during starvation. This is Ribonuclease PH from Sodalis glossinidius (strain morsitans).